Consider the following 385-residue polypeptide: Single-stranded DNA-binding protein 4 (385 aa).

Met1 carries the N-acetylmethionine modification. Residues 17 to 49 enclose the LisH domain; sequence AREKLALYVYEYLLHIGAQKSAQTFLSEIRWEK. 2 disordered regions span residues 122–287 and 331–363; these read FQGP…NSSE and GSGD…GEMA. The span at 245 to 263 shows a compositional bias: low complexity; it reads SPSGNSIPYSSSSPGSYTG. Residues 267-277 show a composition bias toward pro residues; the sequence is GGGPPGTPIMP. Ser341 carries the post-translational modification Phosphoserine. Phosphothreonine is present on Thr355.

The protein resides in the nucleus. The chain is Single-stranded DNA-binding protein 4 (SSBP4) from Homo sapiens (Human).